A 92-amino-acid chain; its full sequence is Small ribosomal subunit protein uS19 (92 aa).

This sequence belongs to the universal ribosomal protein uS19 family.

In terms of biological role, protein S19 forms a complex with S13 that binds strongly to the 16S ribosomal RNA. This chain is Small ribosomal subunit protein uS19, found in Methylorubrum extorquens (strain CM4 / NCIMB 13688) (Methylobacterium extorquens).